A 135-amino-acid polypeptide reads, in one-letter code: uncharacterized protein (135 aa).

Residues 1–70 (MKPDWPRRGA…RWRPQGTGTG (70 aa)) are disordered.

This is an uncharacterized protein from Homo sapiens (Human).